Reading from the N-terminus, the 146-residue chain is MLSEFKRFALRGNVLDLAVGVVIGAAFNQIVNSLVNDVIMPPLGFLVGKMDFSNLYLNLSLTPYASLAEAREAGAPVIAYGLFLNNLLNFLIVAFAVFLLVRQVNRWRPTPPPEPPKTKECPYCLSTVPVKATRCAHCTSDLTAES.

A run of 2 helical transmembrane segments spans residues 14–34 and 81–101; these read VLDL…VNSL and GLFL…FLLV.

This sequence belongs to the MscL family. In terms of assembly, homopentamer.

Its subcellular location is the cell membrane. Functionally, channel that opens in response to stretch forces in the membrane lipid bilayer. May participate in the regulation of osmotic pressure changes within the cell. In Symbiobacterium thermophilum (strain DSM 24528 / JCM 14929 / IAM 14863 / T), this protein is Large-conductance mechanosensitive channel.